A 264-amino-acid polypeptide reads, in one-letter code: Apolipoprotein A-I (264 aa).

Positions M1 to A18 are cleaved as a signal peptide. 2 consecutive repeat copies span residues L67 to G88 and P89 to N110. The tract at residues L67–Q264 is 10 X approximate tandem repeats. At M109 the chain carries Methionine sulfoxide. The 3; half-length repeat unit spans residues K111 to Q121. 3 repeat units span residues P122–A143, P144–S165, and P166–A187. Residues P188 to N207 form a 7; truncated repeat. A Methionine sulfoxide modification is found at M193. Repeat unit 8 spans residues P208–R229. The stretch at P230–M240 is one 9; half-length repeat. Residues M240 and M242 each carry the methionine sulfoxide modification. Residues P241 to Q264 form repeat 10.

Belongs to the apolipoprotein A1/A4/E family. As to quaternary structure, homodimer. Interacts with APOA1BP and CLU. Component of a sperm activating protein complex (SPAP), consisting of APOA1, an immunoglobulin heavy chain, an immunoglobulin light chain and albumin. Interacts with NDRG1. Interacts with SCGB3A2. Interacts with NAXE and YJEFN3. Post-translationally, glycosylated. In terms of processing, palmitoylated. May be acylated. Post-translationally, phosphorylation sites are present in the extracellular medium. In terms of tissue distribution, major protein of plasma HDL, also found in chylomicrons.

Its subcellular location is the secreted. Functionally, participates in the reverse transport of cholesterol from tissues to the liver for excretion by promoting cholesterol efflux from tissues and by acting as a cofactor for the lecithin cholesterol acyltransferase (LCAT). As part of the SPAP complex, activates spermatozoa motility. The sequence is that of Apolipoprotein A-I (Apoa1) from Mus musculus (Mouse).